A 515-amino-acid polypeptide reads, in one-letter code: Zinc metalloproteinase-disintegrin BA-5A (515 aa).

A signal peptide spans M1–S20. Positions I21 to S193 are excised as a propeptide. The 197-residue stretch at R203–P399 folds into the Peptidase M12B domain. A glycan (N-linked (GlcNAc...) asparagine) is linked at N263. Intrachain disulfides connect C314–C394, C354–C378, C356–C361, C410–C429, C421–C439, C423–C434, C433–C456, C447–C453, C452–C478, C465–C485, and C472–C497. H339 is a Zn(2+) binding site. E340 is an active-site residue. 2 residues coordinate Zn(2+): H343 and H349. An N-linked (GlcNAc...) asparagine glycan is attached at N377. Residues P407 to N493 enclose the Disintegrin domain. The D/ECD-tripeptide signature appears at E471 to D473.

It belongs to the venom metalloproteinase (M12B) family. P-II subfamily. As to quaternary structure, monomer. The cofactor is Zn(2+). As to expression, expressed by the venom gland.

The protein resides in the secreted. Functionally, snake venom zinc metalloprotease that possesses hemorrhagic activity and degrades alpha chain of fibrinogen (FGA). May inhibit alpha-2/beta-1 integrin (ITGA2/ITGB1). In Bitis arietans (African puff adder), this protein is Zinc metalloproteinase-disintegrin BA-5A.